The chain runs to 2089 residues: Non-reducing polyketide synthase PKS16 (2089 aa).

The interval 8–243 (VLFGDQTVDP…IKLPITAAFH (236 aa)) is N-terminal acylcarrier protein transacylase (SAT) domain (SAT). The disordered stretch occupies residues 342–364 (AGIEVSRSTEMQPRQEQRTKPRS). Basic and acidic residues predominate over residues 354–364 (PRQEQRTKPRS). Residues 364 to 793 (SSDIAIIGYA…GGNTSLLIED (430 aa)) form the Ketosynthase family 3 (KS3) domain. Residues Cys536, His671, and His710 each act as for beta-ketoacyl synthase activity in the active site. The interval 891-1214 (VFLFTGQGSQ…SIANAYNSGV (324 aa)) is malonyl-CoA:ACP transacylase (MAT) domain. Residues 1273–1586 (TTCLQVIENE…KRTTLQSLLG (314 aa)) are product template (PT) domain. An N-terminal hotdog fold region spans residues 1276–1408 (LQVIENETFT…CTVMYGDGHQ (133 aa)). The PKS/mFAS DH domain maps to 1276 to 1582 (LQVIENETFT…FQQMKRTTLQ (307 aa)). Catalysis depends on His1309, which acts as the Proton acceptor; for dehydratase activity. Residues 1435-1582 (IHRMLKEMIY…FQQMKRTTLQ (148 aa)) form a C-terminal hotdog fold region. Asp1495 functions as the Proton donor; for dehydratase activity in the catalytic mechanism. Residues 1617 to 1694 (QSPVAGFSKV…ELRAFFLDKM (78 aa)) form the Carrier 1 domain. Position 1654 is an O-(pantetheine 4'-phosphoryl)serine (Ser1654). The segment at 1697-1730 (PQATANDDDSDDSSDDEGPGFSRSQSNSTISTPE) is disordered. Acidic residues predominate over residues 1702 to 1714 (NDDDSDDSSDDEG). Positions 1718–1728 (SRSQSNSTIST) are enriched in polar residues. Positions 1729 to 1806 (PEEPDVVNVL…DVQKALGAAP (78 aa)) constitute a Carrier 2 domain. An O-(pantetheine 4'-phosphoryl)serine modification is found at Ser1766. The tract at residues 1848–2083 (LFLLPDGAGS…VVGGNHFSIM (236 aa)) is thioesterase (TE) domain.

It functions in the pathway secondary metabolite biosynthesis. Non-reducing polyketide synthase; part of the gene cluster that mediates the biosynthesis of orcinol depsidone grayanic acid (GRA), the only major secondary metabolite known in C.grayi. The first step consists in the ring and depside synthesis by PKS16 leading to 4-O-demethylsphaerophorin, involving different orcinol-like rings, one with acetyl CoA and the other with octanoyl CoA as the starter. Further depsidone formation by the GRA cluster-specific cytochrome P450 leads to 4-O-demethylgrayanic acid. Finally, the cluster specific O-methyltransferase probably converts the 4-O-demethylgrayanic acid into grayanic acid. The protein is Non-reducing polyketide synthase PKS16 of Cladonia grayi (Gray's cup lichen).